Reading from the N-terminus, the 336-residue chain is Vacuolar protein sorting-associated protein 26B (336 aa).

S302, S304, and S319 each carry phosphoserine.

Belongs to the VPS26 family. In terms of assembly, component of the heterotrimeric retromer cargo-selective complex (CSC), also described as vacuolar protein sorting subcomplex (VPS), formed by VPS26 (VPS26A or VPS26B), VPS29 and VPS35. The CSC has a highly elongated structure with VPS26 and VPS29 binding independently at opposite distal ends of VPS35 as central platform. The CSC is believed to associate with variable sorting nexins to form functionally distinct retromer complex variants. The originally described SNX-BAR retromer is a pentamer containing the CSC and a heterodimeric membrane-deforming subcomplex formed between SNX1 or SNX2 and SNX5 or SNX6 (also called SNX-BAR subcomplex); the respective CSC and SNX-BAR subcomplexes associate with low affinity. The CSC associates with SNX3 to form a SNX3-retromer complex. The CSC associates with SNX27, the WASH complex and the SNX-BAR subcomplex to form the SNX27-retromer complex. Interacts with VPS29, VPS35, TBC1D5, GOLPH3, SNX27.

It is found in the cytoplasm. It localises to the membrane. Its subcellular location is the early endosome. The protein localises to the late endosome. Functionally, acts as a component of the retromer cargo-selective complex (CSC). The CSC is believed to be the core functional component of retromer or respective retromer complex variants acting to prevent missorting of selected transmembrane cargo proteins into the lysosomal degradation pathway. The recruitment of the CSC to the endosomal membrane involves RAB7A and SNX3. The SNX-BAR retromer mediates retrograde transport of cargo proteins from endosomes to the trans-Golgi network (TGN) and is involved in endosome-to-plasma membrane transport for cargo protein recycling. The SNX3-retromer mediates the retrograde transport of WLS distinct from the SNX-BAR retromer pathway. The SNX27-retromer is believed to be involved in endosome-to-plasma membrane trafficking and recycling of a broad spectrum of cargo proteins. The CSC seems to act as recruitment hub for other proteins, such as the WASH complex and TBC1D5. May be involved in retrograde transport of SORT1 but not of IGF2R. Acts redundantly with VSP26A in SNX-27 mediated endocytic recycling of SLC2A1/GLUT1. The protein is Vacuolar protein sorting-associated protein 26B (VPS26B) of Pongo abelii (Sumatran orangutan).